The chain runs to 199 residues: GTP cyclohydrolase 1 (199 aa).

Zn(2+) contacts are provided by cysteine 89, histidine 92, and cysteine 161.

The protein belongs to the GTP cyclohydrolase I family. Toroid-shaped homodecamer, composed of two pentamers of five dimers.

It catalyses the reaction GTP + H2O = 7,8-dihydroneopterin 3'-triphosphate + formate + H(+). Its pathway is cofactor biosynthesis; 7,8-dihydroneopterin triphosphate biosynthesis; 7,8-dihydroneopterin triphosphate from GTP: step 1/1. The chain is GTP cyclohydrolase 1 from Bifidobacterium longum (strain NCC 2705).